We begin with the raw amino-acid sequence, 329 residues long: MSPRPLKVAVTGAAGQIGYSLLFRLASGSLLGLDRPIELRLLEIEPALKALEGVVMELDDCAFLLLAGVEIGADPNKVFDGVNLALLVGARPRGPGMERGDLLEANGAIFTAQGKALNAVAAADIRVGVTGNPANTNALIAMTNAPDIPRERFSALTRLDHNRAIAQLATKTGSAVTDIRKMTIWGNHSATQYPDVFHAEIGGKNAAEVVGDQAWIEDYFIPTVAKRGAAIIDARGASSAASAASATIDAARDWLLGTPEGNWVSMAVVSDGSYGVPEGLISSFPVTTTDGDWTIVRGLGIDDFSRGRIDKSTAELADERMAVKQLGLI.

NAD(+) is bound at residue 12 to 18 (GAAGQIG). Substrate-binding residues include arginine 93 and arginine 99. NAD(+) contacts are provided by residues asparagine 106, glutamine 113, and 130 to 132 (TGN). Substrate is bound by residues asparagine 132 and arginine 163. Histidine 188 functions as the Proton acceptor in the catalytic mechanism.

This sequence belongs to the LDH/MDH superfamily. MDH type 2 family.

It carries out the reaction (S)-malate + NAD(+) = oxaloacetate + NADH + H(+). Functionally, catalyzes the reversible oxidation of malate to oxaloacetate. In Mycobacterium leprae (strain TN), this protein is Malate dehydrogenase.